Here is a 695-residue protein sequence, read N- to C-terminus: Eukaryotic translation initiation factor 3 subunit B (695 aa).

The segment covering 1–10 (MAKKKGDEKA) has biased composition (basic and acidic residues). Residues 1 to 43 (MAKKKGDEKANPAPQSDNEEQNFEEEPDFDDPEDFVEIPEEEL) form a disordered region. Residues 17 to 43 (DNEEQNFEEEPDFDDPEDFVEIPEEEL) show a composition bias toward acidic residues. The RRM domain occupies 60–144 (NVVVVDGCPQ…HTFLVNLFTD (85 aa)). 4 WD repeats span residues 164–205 (KVQS…PLLL), 295–335 (PPDE…LLDK), 338–373 (IKIP…TLLE), and 444–486 (EIKE…APTL).

This sequence belongs to the eIF-3 subunit B family. Component of the eukaryotic translation initiation factor 3 (eIF-3) complex.

Its subcellular location is the cytoplasm. RNA-binding component of the eukaryotic translation initiation factor 3 (eIF-3) complex, which is involved in protein synthesis of a specialized repertoire of mRNAs and, together with other initiation factors, stimulates binding of mRNA and methionyl-tRNAi to the 40S ribosome. The eIF-3 complex specifically targets and initiates translation of a subset of mRNAs involved in cell proliferation. The chain is Eukaryotic translation initiation factor 3 subunit B from Bombyx mori (Silk moth).